The sequence spans 543 residues: 2-succinyl-5-enolpyruvyl-6-hydroxy-3-cyclohexene-1-carboxylate synthase (543 aa).

Belongs to the TPP enzyme family. MenD subfamily. In terms of assembly, homodimer. Requires Mg(2+) as cofactor. Mn(2+) is required as a cofactor. The cofactor is thiamine diphosphate.

The enzyme catalyses isochorismate + 2-oxoglutarate + H(+) = 5-enolpyruvoyl-6-hydroxy-2-succinyl-cyclohex-3-ene-1-carboxylate + CO2. It participates in quinol/quinone metabolism; 1,4-dihydroxy-2-naphthoate biosynthesis; 1,4-dihydroxy-2-naphthoate from chorismate: step 2/7. It functions in the pathway quinol/quinone metabolism; menaquinone biosynthesis. In terms of biological role, catalyzes the thiamine diphosphate-dependent decarboxylation of 2-oxoglutarate and the subsequent addition of the resulting succinic semialdehyde-thiamine pyrophosphate anion to isochorismate to yield 2-succinyl-5-enolpyruvyl-6-hydroxy-3-cyclohexene-1-carboxylate (SEPHCHC). This Corynebacterium glutamicum (strain R) protein is 2-succinyl-5-enolpyruvyl-6-hydroxy-3-cyclohexene-1-carboxylate synthase.